Reading from the N-terminus, the 484-residue chain is UDP-N-acetylmuramoyl-L-alanyl-D-glutamate--L-lysine ligase (484 aa).

UDP-N-acetyl-alpha-D-muramoyl-L-alanyl-D-glutamate is bound at residue S43. 119–125 is a binding site for ATP; sequence GTKGKTT. UDP-N-acetyl-alpha-D-muramoyl-L-alanyl-D-glutamate-binding positions include 161 to 162, S188, and R196; that span reads TT. An N6-carboxylysine modification is found at K230. An L-lysine recognition motif motif is present at residues 405–408; it reads DDPN.

The protein belongs to the MurCDEF family. MurE subfamily. Carboxylation is probably crucial for Mg(2+) binding and, consequently, for the gamma-phosphate positioning of ATP.

It is found in the cytoplasm. It catalyses the reaction UDP-N-acetyl-alpha-D-muramoyl-L-alanyl-D-glutamate + L-lysine + ATP = UDP-N-acetyl-alpha-D-muramoyl-L-alanyl-gamma-D-glutamyl-L-lysine + ADP + phosphate + H(+). The protein operates within cell wall biogenesis; peptidoglycan biosynthesis. Catalyzes the addition of L-lysine to the nucleotide precursor UDP-N-acetylmuramoyl-L-alanyl-D-glutamate (UMAG) in the biosynthesis of bacterial cell-wall peptidoglycan. In Streptococcus agalactiae serotype V (strain ATCC BAA-611 / 2603 V/R), this protein is UDP-N-acetylmuramoyl-L-alanyl-D-glutamate--L-lysine ligase.